We begin with the raw amino-acid sequence, 391 residues long: Uroporphyrinogen decarboxylase, chloroplastic (391 aa).

Residues Arg71–Arg75, Phe90, Ser120, Asp121, Tyr198, Ser253, and His368 contribute to the substrate site.

The protein belongs to the uroporphyrinogen decarboxylase family. As to quaternary structure, homodimer.

It localises to the plastid. Its subcellular location is the chloroplast. The enzyme catalyses uroporphyrinogen III + 4 H(+) = coproporphyrinogen III + 4 CO2. It participates in porphyrin-containing compound metabolism; protoporphyrin-IX biosynthesis; coproporphyrinogen-III from 5-aminolevulinate: step 4/4. Functionally, catalyzes the decarboxylation of four acetate groups of uroporphyrinogen-III to yield coproporphyrinogen-III. The chain is Uroporphyrinogen decarboxylase, chloroplastic (DCUP) from Nicotiana tabacum (Common tobacco).